A 122-amino-acid chain; its full sequence is Large ribosomal subunit protein uL14c (122 aa).

It belongs to the universal ribosomal protein uL14 family. Part of the 50S ribosomal subunit.

It is found in the plastid. The protein localises to the chloroplast. Binds to 23S rRNA. This is Large ribosomal subunit protein uL14c from Welwitschia mirabilis (Tree tumbo).